A 361-amino-acid polypeptide reads, in one-letter code: Tetraacyldisaccharide 4'-kinase (361 aa).

ATP is bound at residue 49–56 (TTGGTGKT).

Belongs to the LpxK family.

The catalysed reaction is a lipid A disaccharide + ATP = a lipid IVA + ADP + H(+). It functions in the pathway glycolipid biosynthesis; lipid IV(A) biosynthesis; lipid IV(A) from (3R)-3-hydroxytetradecanoyl-[acyl-carrier-protein] and UDP-N-acetyl-alpha-D-glucosamine: step 6/6. Functionally, transfers the gamma-phosphate of ATP to the 4'-position of a tetraacyldisaccharide 1-phosphate intermediate (termed DS-1-P) to form tetraacyldisaccharide 1,4'-bis-phosphate (lipid IVA). The polypeptide is Tetraacyldisaccharide 4'-kinase (Chlorobaculum parvum (strain DSM 263 / NCIMB 8327) (Chlorobium vibrioforme subsp. thiosulfatophilum)).